We begin with the raw amino-acid sequence, 412 residues long: MKIYLVGGAVRDALLGLPVKDRDWVVVGSTPQEMLDAGYQQVGRDFPVFLHPQTHEEYALARTERKSGSGYTGFTCYAAPDVTLEDDLKRRDLTINALAQDDNGEIIDPYNGLGDLQNRLLRHVSPAFGEDPLRVLRVARFAARYAHLGFRIADETLALMREMTHAGELEHLTPERVWKETESALTTRNPQVFFQVLRDCGALRVLFPEIDALFGVPAPARWHPEIDTGIHTLMTLSMAAMLSPQVDVRFATLCHDLGKGLTPPELWPRHHGHGPAGVKLVEQLCQRLRVPNEIRDLARLVAEFHDLIHTFPMLNPKTIVKLFDSIDAWRKPQRVEQLALTSEADVRGRTGFESADYPQGRWLREAWEVAQSVPTKAVVEAGFKGVEIREELTRRRIAAVASWKEQRCPKPD.

Residues Gly8 and Arg11 each contribute to the ATP site. CTP contacts are provided by Gly8 and Arg11. 2 residues coordinate Mg(2+): Asp21 and Asp23. Arg91, Arg137, and Arg140 together coordinate ATP. CTP-binding residues include Arg91, Arg137, and Arg140. Positions 228-329 constitute an HD domain; it reads TGIHTLMTLS…VKLFDSIDAW (102 aa).

This sequence belongs to the tRNA nucleotidyltransferase/poly(A) polymerase family. Bacterial CCA-adding enzyme type 1 subfamily. Monomer. Can also form homodimers and oligomers. Requires Mg(2+) as cofactor. Ni(2+) is required as a cofactor.

The catalysed reaction is a tRNA precursor + 2 CTP + ATP = a tRNA with a 3' CCA end + 3 diphosphate. It carries out the reaction a tRNA with a 3' CCA end + 2 CTP + ATP = a tRNA with a 3' CCACCA end + 3 diphosphate. In terms of biological role, catalyzes the addition and repair of the essential 3'-terminal CCA sequence in tRNAs without using a nucleic acid template. Adds these three nucleotides in the order of C, C, and A to the tRNA nucleotide-73, using CTP and ATP as substrates and producing inorganic pyrophosphate. tRNA 3'-terminal CCA addition is required both for tRNA processing and repair. Also involved in tRNA surveillance by mediating tandem CCA addition to generate a CCACCA at the 3' terminus of unstable tRNAs. While stable tRNAs receive only 3'-terminal CCA, unstable tRNAs are marked with CCACCA and rapidly degraded. The chain is Multifunctional CCA protein from Escherichia coli (strain SMS-3-5 / SECEC).